Consider the following 891-residue polypeptide: MAKPVVETPLMRQYFQIKQKHPDAILLFRVGDFYETFSEDAIVASEILGITLTRRANGAAQFVELAGFPHHALDTYLPKLVRAGKRVAICDQLEDPKKTKTLVKRGITELVTPGVSTNDNVLSHKENNFLAAVSCGKEVFGISLLDISTGEFMAGQGNADYVEKLLTNYRPKEILVERSERSRFNDLFHWSGFIFDMEDWAFSSENNRLRVLKHFDLKSLKGFGLEELSMAVTAAGAVLNYLDLTQHHQLQHITSLSRLDENRYVRLDKFTVRSLELLSPMNEGGKSLLDIIDHTITPMGARRIRQWIVFPLKDPARIQARQRVVEFFFRHPEERAIIAEHLTEIGDLERLVTKGAMGRISPREMVQLRVALQALEPIKEVCTHADEENLRTLGGKLELCKELRDKILREVMPDAPAALGRGPVIAHGVDATLDELRALAYSGKDYLIKLQQQEIERTGIPSLKVAYNNVFGYYIEVRNTHKDKVPAEWIRKQTLVSAERYITEELKEYEAKILGAEEKIAALEGQLYALLVAELQRYVAPLQQDSQAVASLDCLLSFAESARRYRFICPVVDESFTIDIKAGRHPVIEQQLPADEPYIANDIYLDTDRQQVIIVTGPNMSGKSALLRQTALISLMAQIGSFVPAESARIGMVDSIFTRVGASDNISMGESTFMVEMQEASNILNNLTPRSLVLFDELGRGTSTYDGISIAWSIVEYIHDNPKAHPRTLFATHYHELNELEGQLDRVHNFNVSAREVDGKMLFLRKLEPGGSAHSFGIQVARLGGMPHHIVQRATDILHRLEQEREKIEEEEPKTKDTKRGPSEKVKNASPTLPRDEKGRSIDGYQLSFFQLDDPVLSQIREEILDLNIDNLTPLEALNKLNDIKRILRGY.

617 to 624 (GPNMSGKS) contacts ATP. The segment covering 805 to 827 (REKIEEEEPKTKDTKRGPSEKVK) has biased composition (basic and acidic residues). The tract at residues 805 to 840 (REKIEEEEPKTKDTKRGPSEKVKNASPTLPRDEKGR) is disordered.

Belongs to the DNA mismatch repair MutS family.

Functionally, this protein is involved in the repair of mismatches in DNA. It is possible that it carries out the mismatch recognition step. This protein has a weak ATPase activity. This is DNA mismatch repair protein MutS from Porphyromonas gingivalis (strain ATCC BAA-308 / W83).